The following is a 485-amino-acid chain: MSIRYESVENLLTLIKDKKIKPSDVVKDIYDAIEETDPTIKSFLALDKENAIKKAQELDELQAKDQMDGKLFGIPMGIKDNIITNGLETTCASKMLEGFVPIYESTVMEKLHKENAVLIGKLNMDEFAMGGSTETSYFKKTVNPFDHKAVPGGSSGGSAAAVAAGLVPLSLGSDTGGSIRQPAAYCGVVGMKPTYGRVSRFGLVAFASSLDQIGPLTRNVKDNAIVLEAISGADVNDSTSAPVDDVDFTSEIGKDIKGLKVALPKEYLGEGVADDVKEAVQNAVETLKSLGAVVEEVSLPNTKFGIPSYYVIASSEASSNLSRFDGIRYGYHSKEAHSLEELYKMSRSEGFGKEVKRRIFLGTFALSSGYYDAYYKKSQKVRTLIKNDFDKVFENYDVVVGPTAPTTAFNLGEEIDDPLTMYANDLLTTPVNLAGLPGISVPCGQSNGRPIGLQFIGKPFDEKTLYRVAYQYETQYNLHDVYEKL.

Active-site charge relay system residues include K79 and S154. Residue S178 is the Acyl-ester intermediate of the active site.

This sequence belongs to the amidase family. GatA subfamily. As to quaternary structure, heterotrimer of A, B and C subunits.

It catalyses the reaction L-glutamyl-tRNA(Gln) + L-glutamine + ATP + H2O = L-glutaminyl-tRNA(Gln) + L-glutamate + ADP + phosphate + H(+). Its function is as follows. Allows the formation of correctly charged Gln-tRNA(Gln) through the transamidation of misacylated Glu-tRNA(Gln) in organisms which lack glutaminyl-tRNA synthetase. The reaction takes place in the presence of glutamine and ATP through an activated gamma-phospho-Glu-tRNA(Gln). This is Glutamyl-tRNA(Gln) amidotransferase subunit A from Staphylococcus aureus (strain Mu3 / ATCC 700698).